A 309-amino-acid polypeptide reads, in one-letter code: Mitochondrial fission regulator 1-like (309 aa).

Residues 189–221 (DVTEEDEEEEEEEDREEEEEDVSELVPDPMPPV) form a disordered region. A compositionally biased stretch (acidic residues) spans 190 to 211 (VTEEDEEEEEEEDREEEEEDVS). Ser253 is subject to Phosphoserine.

The protein belongs to the MTFR1 family.

Its subcellular location is the mitochondrion outer membrane. Mitochondrial protein required for adaptation of miochondrial dynamics to metabolic changes. Regulates mitochondrial morphology at steady state and mediates AMPK-dependent stress-induced mitochondrial fragmentation via the control of OPA1 levels. This is Mitochondrial fission regulator 1-like (mtfr1l) from Danio rerio (Zebrafish).